A 311-amino-acid chain; its full sequence is Methionyl-tRNA formyltransferase (311 aa).

Residue 110–113 (SLLP) coordinates (6S)-5,6,7,8-tetrahydrofolate.

This sequence belongs to the Fmt family.

It carries out the reaction L-methionyl-tRNA(fMet) + (6R)-10-formyltetrahydrofolate = N-formyl-L-methionyl-tRNA(fMet) + (6S)-5,6,7,8-tetrahydrofolate + H(+). Its function is as follows. Attaches a formyl group to the free amino group of methionyl-tRNA(fMet). The formyl group appears to play a dual role in the initiator identity of N-formylmethionyl-tRNA by promoting its recognition by IF2 and preventing the misappropriation of this tRNA by the elongation apparatus. This Streptococcus pneumoniae serotype 2 (strain D39 / NCTC 7466) protein is Methionyl-tRNA formyltransferase.